We begin with the raw amino-acid sequence, 131 residues long: Large ribosomal subunit protein bL19 (131 aa).

It belongs to the bacterial ribosomal protein bL19 family.

In terms of biological role, this protein is located at the 30S-50S ribosomal subunit interface and may play a role in the structure and function of the aminoacyl-tRNA binding site. This is Large ribosomal subunit protein bL19 from Rhodopseudomonas palustris (strain BisA53).